Here is a 439-residue protein sequence, read N- to C-terminus: Chitinase-like protein Idgf1 (439 aa).

The signal sequence occupies residues 1–20 (MRFQLFYILGLLSVTSLTHA). The 418-residue stretch at 22–439 (SNLICYYDSN…ILRSIKYFMG (418 aa)) folds into the GH18 domain. Residues C26 and C53 are joined by a disulfide bond. 3 N-linked (GlcNAc...) asparagine glycosylation sites follow: N122, N218, and N346. Cysteines 340 and 423 form a disulfide.

Belongs to the glycosyl hydrolase 18 family. IDGF subfamily. As to expression, primarily expressed in yolk cells and fat body. In larvae, it is expressed in large salivary gland cells and weakly expressed in imaginal disks. Less expressed than Idgf2 and Idgf4.

It localises to the secreted. Its function is as follows. Cooperates with insulin-like peptides to stimulate the proliferation, polarization and motility of imaginal disk cells. May act by stabilizing the binding of insulin-like peptides to its receptor through a simultaneous interaction with both molecules to form a multiprotein signaling complex. The chain is Chitinase-like protein Idgf1 (Idgf1) from Drosophila melanogaster (Fruit fly).